The primary structure comprises 399 residues: Transmembrane protein 237 homolog (399 aa).

Over residues 1–11 the composition is skewed to pro residues; sequence MPPTSRPVPPP. Positions 1 to 158 are disordered; it reads MPPTSRPVPP…PHDKRNMPAK (158 aa). 3 stretches are compositionally biased toward basic and acidic residues: residues 36–45, 111–135, and 144–158; these read NQQRRFRENN, EAAK…DPRR, and KSFR…MPAK. The next 4 helical transmembrane spans lie at 222 to 242, 256 to 276, 301 to 321, and 343 to 363; these read IANI…IFSF, MSLP…VSAI, GLIT…CIQL, and VFNV…AFKP.

This sequence belongs to the TMEM237 family.

It is found in the membrane. Its subcellular location is the cell projection. It localises to the cilium. Its function is as follows. Component of the transition zone in primary cilia. Required for ciliogenesis. The chain is Transmembrane protein 237 homolog from Caenorhabditis elegans.